The chain runs to 237 residues: Ribonuclease PH (237 aa).

Residues R86 and 124–126 (GTR) each bind phosphate.

Belongs to the RNase PH family. As to quaternary structure, homohexameric ring arranged as a trimer of dimers.

It catalyses the reaction tRNA(n+1) + phosphate = tRNA(n) + a ribonucleoside 5'-diphosphate. Functionally, phosphorolytic 3'-5' exoribonuclease that plays an important role in tRNA 3'-end maturation. Removes nucleotide residues following the 3'-CCA terminus of tRNAs; can also add nucleotides to the ends of RNA molecules by using nucleoside diphosphates as substrates, but this may not be physiologically important. Probably plays a role in initiation of 16S rRNA degradation (leading to ribosome degradation) during starvation. This chain is Ribonuclease PH, found in Beijerinckia indica subsp. indica (strain ATCC 9039 / DSM 1715 / NCIMB 8712).